Here is a 143-residue protein sequence, read N- to C-terminus: Transcriptional regulator MraZ (143 aa).

2 consecutive SpoVT-AbrB domains span residues 5–47 (EYNH…SSDE) and 76–119 (ASEC…SNVE).

This sequence belongs to the MraZ family. Forms oligomers.

The protein resides in the cytoplasm. It localises to the nucleoid. This chain is Transcriptional regulator MraZ, found in Alkaliphilus oremlandii (strain OhILAs) (Clostridium oremlandii (strain OhILAs)).